The chain runs to 512 residues: D-alanine--D-alanyl carrier protein ligase (512 aa).

ATP is bound at residue 152–153 (TS). Asp199 contacts D-alanine. Residue 294–299 (NAYGPT) coordinates ATP. Residue Val303 coordinates D-alanine. Residues Asp385, 397–400 (YGGR), and Lys499 contribute to the ATP site. D-alanine is bound at residue Lys499.

Belongs to the ATP-dependent AMP-binding enzyme family. DltA subfamily.

It localises to the cytoplasm. The enzyme catalyses holo-[D-alanyl-carrier protein] + D-alanine + ATP = D-alanyl-[D-alanyl-carrier protein] + AMP + diphosphate. It functions in the pathway cell wall biogenesis; lipoteichoic acid biosynthesis. In terms of biological role, catalyzes the first step in the D-alanylation of lipoteichoic acid (LTA), the activation of D-alanine and its transfer onto the D-alanyl carrier protein (Dcp) DltC. In an ATP-dependent two-step reaction, forms a high energy D-alanyl-AMP intermediate, followed by transfer of the D-alanyl residue as a thiol ester to the phosphopantheinyl prosthetic group of the Dcp. D-alanylation of LTA plays an important role in modulating the properties of the cell wall in Gram-positive bacteria, influencing the net charge of the cell wall. This is D-alanine--D-alanyl carrier protein ligase from Streptococcus pyogenes serotype M18 (strain MGAS8232).